The chain runs to 542 residues: Membrane protein insertase YidC (542 aa).

A run of 6 helical transmembrane segments spans residues 6-26 (NILL…WQTD), 326-346 (LVVD…LLMF), 350-370 (FVGN…GMLY), 421-441 (GGCL…WVLL), 458-478 (LSVQ…MFLM), and 501-521 (VIFT…WLVG).

It belongs to the OXA1/ALB3/YidC family. Type 1 subfamily. In terms of assembly, interacts with the Sec translocase complex via SecD. Specifically interacts with transmembrane segments of nascent integral membrane proteins during membrane integration.

The protein resides in the cell inner membrane. Functionally, required for the insertion and/or proper folding and/or complex formation of integral membrane proteins into the membrane. Involved in integration of membrane proteins that insert both dependently and independently of the Sec translocase complex, as well as at least some lipoproteins. Aids folding of multispanning membrane proteins. The chain is Membrane protein insertase YidC from Shewanella loihica (strain ATCC BAA-1088 / PV-4).